We begin with the raw amino-acid sequence, 334 residues long: Tetraacyldisaccharide 4'-kinase (334 aa).

An ATP-binding site is contributed by threonine 60–threonine 67.

Belongs to the LpxK family.

The catalysed reaction is a lipid A disaccharide + ATP = a lipid IVA + ADP + H(+). Its pathway is glycolipid biosynthesis; lipid IV(A) biosynthesis; lipid IV(A) from (3R)-3-hydroxytetradecanoyl-[acyl-carrier-protein] and UDP-N-acetyl-alpha-D-glucosamine: step 6/6. Transfers the gamma-phosphate of ATP to the 4'-position of a tetraacyldisaccharide 1-phosphate intermediate (termed DS-1-P) to form tetraacyldisaccharide 1,4'-bis-phosphate (lipid IVA). The protein is Tetraacyldisaccharide 4'-kinase of Stutzerimonas stutzeri (strain A1501) (Pseudomonas stutzeri).